Reading from the N-terminus, the 72-residue chain is Translation initiation factor IF-1 2 (72 aa).

Positions 1–72 (MAKEELIEFE…TKGRINYRHK (72 aa)) constitute an S1-like domain.

The protein belongs to the IF-1 family. As to quaternary structure, component of the 30S ribosomal translation pre-initiation complex which assembles on the 30S ribosome in the order IF-2 and IF-3, IF-1 and N-formylmethionyl-tRNA(fMet); mRNA recruitment can occur at any time during PIC assembly.

The protein resides in the cytoplasm. One of the essential components for the initiation of protein synthesis. Stabilizes the binding of IF-2 and IF-3 on the 30S subunit to which N-formylmethionyl-tRNA(fMet) subsequently binds. Helps modulate mRNA selection, yielding the 30S pre-initiation complex (PIC). Upon addition of the 50S ribosomal subunit IF-1, IF-2 and IF-3 are released leaving the mature 70S translation initiation complex. The sequence is that of Translation initiation factor IF-1 2 from Ralstonia nicotianae (strain ATCC BAA-1114 / GMI1000) (Ralstonia solanacearum).